Here is a 254-residue protein sequence, read N- to C-terminus: Sugar fermentation stimulation protein homolog (254 aa).

Belongs to the SfsA family.

The polypeptide is Sugar fermentation stimulation protein homolog (Parasynechococcus marenigrum (strain WH8102)).